The primary structure comprises 421 residues: 4-hydroxy-3-methylbut-2-en-1-yl diphosphate synthase (flavodoxin) (421 aa).

Residues Cys298, Cys301, Cys344, and Glu351 each contribute to the [4Fe-4S] cluster site.

The protein belongs to the IspG family. It depends on [4Fe-4S] cluster as a cofactor.

It catalyses the reaction (2E)-4-hydroxy-3-methylbut-2-enyl diphosphate + oxidized [flavodoxin] + H2O + 2 H(+) = 2-C-methyl-D-erythritol 2,4-cyclic diphosphate + reduced [flavodoxin]. Its pathway is isoprenoid biosynthesis; isopentenyl diphosphate biosynthesis via DXP pathway; isopentenyl diphosphate from 1-deoxy-D-xylulose 5-phosphate: step 5/6. In terms of biological role, converts 2C-methyl-D-erythritol 2,4-cyclodiphosphate (ME-2,4cPP) into 1-hydroxy-2-methyl-2-(E)-butenyl 4-diphosphate. This chain is 4-hydroxy-3-methylbut-2-en-1-yl diphosphate synthase (flavodoxin), found in Neisseria gonorrhoeae (strain ATCC 700825 / FA 1090).